The following is a 567-amino-acid chain: Malate synthase, glyoxysomal (567 aa).

Arginine 182 serves as the catalytic Proton acceptor. Residue aspartate 468 is the Proton donor of the active site. Positions 565-567 (SRL) match the Microbody targeting signal motif.

It belongs to the malate synthase family.

Its subcellular location is the glyoxysome. It carries out the reaction glyoxylate + acetyl-CoA + H2O = (S)-malate + CoA + H(+). It participates in carbohydrate metabolism; glyoxylate cycle; (S)-malate from isocitrate: step 2/2. The polypeptide is Malate synthase, glyoxysomal (Ricinus communis (Castor bean)).